We begin with the raw amino-acid sequence, 437 residues long: Protein arginine methyltransferase NDUFAF7, mitochondrial (437 aa).

The transit peptide at 1-42 directs the protein to the mitochondrion; the sequence is MSGLARLQRLQKFGFLMVSASANRPIQRYQCSRTEKPQKRTS.

This sequence belongs to the NDUFAF7 family.

The protein resides in the mitochondrion. The enzyme catalyses L-arginyl-[protein] + 2 S-adenosyl-L-methionine = N(omega),N(omega)'-dimethyl-L-arginyl-[protein] + 2 S-adenosyl-L-homocysteine + 2 H(+). Functionally, arginine methyltransferase involved in the assembly or stability of mitochondrial NADH:ubiquinone oxidoreductase complex (complex I). Acts by mediating symmetric dimethylation of 'Arg-118' of ndufs2 after it assembles into the complex I, stabilizing the early intermediate complex. The sequence is that of Protein arginine methyltransferase NDUFAF7, mitochondrial from Xenopus laevis (African clawed frog).